The primary structure comprises 553 residues: Arginine--tRNA ligase (553 aa).

The short motif at 130–140 is the 'HIGH' region element; sequence ANPTGDLHIGH.

Belongs to the class-I aminoacyl-tRNA synthetase family. Monomer.

The protein localises to the cytoplasm. The enzyme catalyses tRNA(Arg) + L-arginine + ATP = L-arginyl-tRNA(Arg) + AMP + diphosphate. The protein is Arginine--tRNA ligase of Staphylococcus epidermidis (strain ATCC 35984 / DSM 28319 / BCRC 17069 / CCUG 31568 / BM 3577 / RP62A).